The primary structure comprises 428 residues: D-serine dehydratase (428 aa).

Lysine 57 is subject to N6-(pyridoxal phosphate)lysine. Residues tyrosine 203, tyrosine 210, threonine 255, glycine 286, and asparagine 287 each contribute to the pyridoxal 5'-phosphate site. Residues histidine 398 and cysteine 400 each contribute to the Zn(2+) site.

It belongs to the DSD1 family. Homodimer. Pyridoxal 5'-phosphate serves as cofactor. Zn(2+) is required as a cofactor.

It carries out the reaction D-serine = pyruvate + NH4(+). Sodium cyanoborohydride, N-ethylmaleimide, hydroxylamine, phenyhydrazin and EDTA are inhibitors of the catalytic activity. Catalyzes the conversion of D-serine to pyruvate and ammonia. May play a role in D-serine detoxification. This Saccharomyces cerevisiae (strain ATCC 204508 / S288c) (Baker's yeast) protein is D-serine dehydratase.